The following is a 345-amino-acid chain: KRR1 small subunit processome component homolog (345 aa).

The KH domain occupies Asp-125 to Asn-193. The segment covering Asn-232 to Lys-245 has biased composition (basic residues). Disordered stretches follow at residues Asn-232 to Val-260 and Gln-273 to Lys-329. The stretch at Phe-270–Arg-298 forms a coiled coil. Basic and acidic residues-rich tracts occupy residues Lys-276–Asp-302 and Leu-315–Lys-329.

It belongs to the KRR1 family. Monomer. Component of the ribosomal small subunit (SSU) processome.

The protein resides in the nucleus. The protein localises to the nucleolus. Required for 40S ribosome biogenesis. Involved in nucleolar processing of pre-18S ribosomal RNA and ribosome assembly. Binds to RNA. Required for female germline development, cell viability during eye development and for survival of dividing cells and epithelial cells during early wing disk development. The chain is KRR1 small subunit processome component homolog from Drosophila erecta (Fruit fly).